We begin with the raw amino-acid sequence, 209 residues long: Ribulose-phosphate 3-epimerase (209 aa).

S8 is a binding site for substrate. A divalent metal cation contacts are provided by H33, D35, H64, and D170. The active-site Proton acceptor is the D35. Substrate is bound by residues H64, 170 to 172 (DGG), and 191 to 192 (GS). D170 functions as the Proton donor in the catalytic mechanism.

It belongs to the ribulose-phosphate 3-epimerase family. It depends on a divalent metal cation as a cofactor.

The catalysed reaction is D-ribulose 5-phosphate = D-xylulose 5-phosphate. The protein operates within carbohydrate degradation. In terms of biological role, catalyzes the reversible epimerization of D-ribulose 5-phosphate to D-xylulose 5-phosphate. In Mycoplasma genitalium (strain ATCC 33530 / DSM 19775 / NCTC 10195 / G37) (Mycoplasmoides genitalium), this protein is Ribulose-phosphate 3-epimerase.